Here is a 618-residue protein sequence, read N- to C-terminus: 1-deoxy-D-xylulose-5-phosphate synthase (618 aa).

Residues histidine 70 and 111-113 (GHS) contribute to the thiamine diphosphate site. Aspartate 142 contacts Mg(2+). Residues 143 to 144 (GS), asparagine 171, tyrosine 278, and glutamate 360 each bind thiamine diphosphate. Asparagine 171 contacts Mg(2+).

The protein belongs to the transketolase family. DXPS subfamily. Homodimer. The cofactor is Mg(2+). Requires thiamine diphosphate as cofactor.

The enzyme catalyses D-glyceraldehyde 3-phosphate + pyruvate + H(+) = 1-deoxy-D-xylulose 5-phosphate + CO2. It participates in metabolic intermediate biosynthesis; 1-deoxy-D-xylulose 5-phosphate biosynthesis; 1-deoxy-D-xylulose 5-phosphate from D-glyceraldehyde 3-phosphate and pyruvate: step 1/1. Functionally, catalyzes the acyloin condensation reaction between C atoms 2 and 3 of pyruvate and glyceraldehyde 3-phosphate to yield 1-deoxy-D-xylulose-5-phosphate (DXP). This Helicobacter pylori (strain J99 / ATCC 700824) (Campylobacter pylori J99) protein is 1-deoxy-D-xylulose-5-phosphate synthase.